Reading from the N-terminus, the 195-residue chain is Myelin basic protein (195 aa).

An N-acetylalanine modification is found at Ala2. A phosphoserine mark is found at Ser8 and Ser13. Tyr15 is modified (phosphotyrosine). Thr18 carries the post-translational modification Phosphothreonine. Ser20 carries the post-translational modification Phosphoserine. Position 21 is a phosphothreonine (Thr21). 2 positions are modified to citrulline: Arg26 and Arg32. Thr36 is modified (phosphothreonine). Ser41 carries the post-translational modification Phosphoserine. 2 positions are modified to omega-N-methylarginine: Arg44 and Arg50. The interval 45–79 is disordered; the sequence is FFSGDRGAPKRGSGKVPWLKQSRSPLPSHARSRPG. Ser57 carries the post-translational modification Phosphoserine. Thr92 is modified (phosphothreonine). Tyr94 carries the post-translational modification Phosphotyrosine. Ser101 carries the post-translational modification Phosphoserine. Phosphothreonine occurs at positions 104, 119, and 122. A disordered region spans residues 117–139; the sequence is IVTPRTPPPSQGKGRGLSLSRFS. Gln127 carries the deamidated glutamine modification. Arg131 bears the Omega-N-methylarginine; alternate mark. Arg131 is subject to Symmetric dimethylarginine; alternate. Position 139 is a phosphoserine (Ser139). The residue at position 146 (Lys146) is an N6-acetyllysine. Residue Arg154 is modified to Citrulline. Gln172 is modified (deamidated glutamine). At Arg184 the chain carries Citrulline. Ser186 carries the phosphoserine modification. A Phosphoserine; by UHMK1 modification is found at Ser190. Arg195 bears the Citrulline mark.

It belongs to the myelin basic protein family. As to quaternary structure, homodimer. As in other animals, several charge isomers may be produced as a result of optional post-translational modifications, such as phosphorylation of serine or threonine residues, deamidation of glutamine or asparagine residues, citrullination and methylation of arginine residues. In terms of processing, arg-131 was found to be 44% monomethylated and 11% symmetrically dimethylated. Post-translationally, phosphorylated by TAOK2, VRK2, MAPK11, MAPK12, MAPK14 and MINK1. Proteolytically cleaved in B cell lysosomes by cathepsin CTSG which degrades the major immunogenic MBP epitope and prevents the activation of MBP-specific autoreactive T cells. As to expression, found in both the central and the peripheral nervous system.

Its subcellular location is the myelin membrane. In terms of biological role, is, with PLP, the most abundant protein component of the myelin membrane in the CNS. Has a role in both the formation and stabilization of this compact multilayer arrangement of bilayers. Each splice variant and charge isomer may have a specialized function in the assembly of an optimized, biochemically functional myelin membrane. The sequence is that of Myelin basic protein (Mbp) from Rattus norvegicus (Rat).